Reading from the N-terminus, the 234-residue chain is Peroxiredoxin-2E, chloroplastic (234 aa).

The transit peptide at 1 to 70 (MATSLSVSRF…TRSFATTPVT (70 aa)) directs the protein to the chloroplast. Residues 73–234 (ISVGDKLPDS…SSAEDMLKAL (162 aa)) form the Thioredoxin domain. Position 82 is a phosphoserine (serine 82). The active-site Cysteine sulfenic acid (-SOH) intermediate is the cysteine 121.

It belongs to the peroxiredoxin family. Prx5 subfamily. As to quaternary structure, monomer. Expressed in all tissues but predominantly in buds, siliques and seeds.

The protein localises to the plastid. The protein resides in the chloroplast stroma. The enzyme catalyses [glutaredoxin]-dithiol + a hydroperoxide = [glutaredoxin]-disulfide + an alcohol + H2O. Thiol-specific peroxidase that catalyzes the reduction of hydrogen peroxide and organic hydroperoxides to water and alcohols, respectively. Plays a role in cell protection against oxidative stress by detoxifying peroxides. May be involved in chloroplast redox homeostasis. This chain is Peroxiredoxin-2E, chloroplastic (PRXIIE), found in Arabidopsis thaliana (Mouse-ear cress).